Consider the following 299-residue polypeptide: Zinc finger protein 414 (299 aa).

Composition is skewed to polar residues over residues 1–20 and 70–80; these read MEEL…SSSN and SCQTSSTTRGV. The segment at 1 to 102 is disordered; the sequence is MEELSGPSSD…PPPGKQIPCS (102 aa). C2H2-type zinc fingers lie at residues 99-123 and 135-159; these read IPCS…LRTH and FRCS…GKLH. Residues 166–190 form a C2H2-type 3; degenerate zinc finger; sequence FKCENCLLRFRTHRSLFKHLHVCID. Disordered regions lie at residues 193-228 and 254-299; these read QNPA…PFPL and PRLR…GACR. The span at 203–215 shows a compositional bias: basic and acidic residues; that stretch reads LDKEPPVPERPPE. Residues 217–228 are compositionally biased toward low complexity; sequence DPSSSLGLPFPL. Polar residues predominate over residues 268–285; the sequence is TSSTAIWKKSQGATSSPR.

It belongs to the krueppel C2H2-type zinc-finger protein family.

It localises to the nucleus. Its function is as follows. May be involved in transcriptional regulation. This is Zinc finger protein 414 (Znf414) from Rattus norvegicus (Rat).